Here is a 308-residue protein sequence, read N- to C-terminus: Isoflavone reductase homolog (308 aa).

NADP(+) is bound by residues 11 to 17 (GGTGYIG), R36, and K45. K133 functions as the Proton acceptor in the catalytic mechanism. Residue R137 coordinates NADP(+).

Belongs to the NmrA-type oxidoreductase family. Isoflavone reductase subfamily.

It is found in the cytoplasm. The sequence is that of Isoflavone reductase homolog from Solanum tuberosum (Potato).